We begin with the raw amino-acid sequence, 147 residues long: RxLR effector protein Avr3a (147 aa).

Residues 1–21 form the signal peptide; sequence MRLAIMLSATAVAINFATCSA. Positions 44–59 match the RxLR-dEER motif; that stretch reads RLLRKNEENEETSEER. K48 carries the N6-acetyllysine modification. The tract at residues 77–147 is effector domain; that stretch reads ALTKRADAKK…YMMHLGLTGY (71 aa).

This sequence belongs to the RxLR effector family. Forms homodimers via the RxLR-dEER motif. Interacts with host E3 ligase CMPG1. Interacts with host DRP2. Proteolytically cleaved. The cleavage site directly after the RxLR sequence and the high conservation among other effector proteins suggest that the RxLR motif might play a crucial role in the intracellular processing before secretion. Post-translationally, glycosylated. In terms of processing, N-acetylated at Lys-48 after cleavage.

The protein localises to the secreted. It localises to the host cytoplasm. The protein resides in the host endosome. Multifunctional effector that can suppress host BAK1/SERK3-mediated immunity through at least two different pathways. Manipulates plant immunity by targeting and stabilizing host E3 ligase CMPG1. Preventing the normal 26S proteasome-dependent degradation of potato CMPG1, and thus potentially of its protein substrates in the host cell, further abolishes host cell death during the biotrophic phase of infection. Also associates with the dynamin-related protein 2 (DRP2), a plant GTPase involved in immune receptor-mediated endocytosis. The Avr3A(KI) form is recognized by R3a which triggers R3a-mediated hypersensitivity and suppresses INF1-induced cell death. This is RxLR effector protein Avr3a from Phytophthora infestans (Potato late blight agent).